The chain runs to 125 residues: Large ribosomal subunit protein bL17 (125 aa).

The protein belongs to the bacterial ribosomal protein bL17 family. In terms of assembly, part of the 50S ribosomal subunit. Contacts protein L32.

The chain is Large ribosomal subunit protein bL17 from Marinomonas sp. (strain MWYL1).